The primary structure comprises 302 residues: Probable 2-(5''-triphosphoribosyl)-3'-dephosphocoenzyme-A synthase (302 aa).

Belongs to the CitG/MdcB family.

It carries out the reaction 3'-dephospho-CoA + ATP = 2'-(5''-triphospho-alpha-D-ribosyl)-3'-dephospho-CoA + adenine. The sequence is that of Probable 2-(5''-triphosphoribosyl)-3'-dephosphocoenzyme-A synthase from Albidiferax ferrireducens (strain ATCC BAA-621 / DSM 15236 / T118) (Rhodoferax ferrireducens).